The primary structure comprises 115 residues: Large ribosomal subunit protein bL19 (115 aa).

Belongs to the bacterial ribosomal protein bL19 family.

This protein is located at the 30S-50S ribosomal subunit interface and may play a role in the structure and function of the aminoacyl-tRNA binding site. The sequence is that of Large ribosomal subunit protein bL19 from Francisella tularensis subsp. tularensis (strain WY96-3418).